We begin with the raw amino-acid sequence, 58 residues long: MLKWALFFAVVAVIAGVLGFTGVAAGAAAIAKFLFIVFVILCVVFLVLGFVVTKKIVD.

The next 2 membrane-spanning stretches (helical) occupy residues 4–24 (WALFFAVVAVIAGVLGFTGVA) and 33–53 (FLFIVFVILCVVFLVLGFVVT).

Belongs to the UPF0391 family.

The protein localises to the cell membrane. The chain is UPF0391 membrane protein Bxeno_A2959 from Paraburkholderia xenovorans (strain LB400).